We begin with the raw amino-acid sequence, 192 residues long: 7-methyl-GTP pyrophosphatase (192 aa).

D69 functions as the Proton acceptor in the catalytic mechanism.

Belongs to the Maf family. YceF subfamily. It depends on a divalent metal cation as a cofactor.

The protein resides in the cytoplasm. It carries out the reaction N(7)-methyl-GTP + H2O = N(7)-methyl-GMP + diphosphate + H(+). Its function is as follows. Nucleoside triphosphate pyrophosphatase that hydrolyzes 7-methyl-GTP (m(7)GTP). May have a dual role in cell division arrest and in preventing the incorporation of modified nucleotides into cellular nucleic acids. In Pseudomonas putida (strain ATCC 47054 / DSM 6125 / CFBP 8728 / NCIMB 11950 / KT2440), this protein is 7-methyl-GTP pyrophosphatase (maf-2).